The primary structure comprises 156 residues: Small ribosomal subunit protein uS7 (156 aa).

Belongs to the universal ribosomal protein uS7 family. Part of the 30S ribosomal subunit. Contacts proteins S9 and S11.

Functionally, one of the primary rRNA binding proteins, it binds directly to 16S rRNA where it nucleates assembly of the head domain of the 30S subunit. Is located at the subunit interface close to the decoding center, probably blocks exit of the E-site tRNA. The sequence is that of Small ribosomal subunit protein uS7 from Afipia carboxidovorans (strain ATCC 49405 / DSM 1227 / KCTC 32145 / OM5) (Oligotropha carboxidovorans).